Consider the following 152-residue polypeptide: Xanthine-guanine phosphoribosyltransferase (152 aa).

5-phospho-alpha-D-ribose 1-diphosphate contacts are provided by residues 37 to 38 (RG) and 88 to 96 (DDLVDTGGT). Asp-89 contributes to the Mg(2+) binding site. Residues Asp-92 and Ile-135 each contribute to the guanine site. Xanthine-binding residues include Asp-92 and Ile-135. GMP-binding positions include 92-96 (DTGGT) and 134-135 (WI).

Belongs to the purine/pyrimidine phosphoribosyltransferase family. XGPT subfamily. In terms of assembly, homotetramer. Mg(2+) is required as a cofactor.

It localises to the cell inner membrane. The catalysed reaction is GMP + diphosphate = guanine + 5-phospho-alpha-D-ribose 1-diphosphate. It catalyses the reaction XMP + diphosphate = xanthine + 5-phospho-alpha-D-ribose 1-diphosphate. The enzyme catalyses IMP + diphosphate = hypoxanthine + 5-phospho-alpha-D-ribose 1-diphosphate. It functions in the pathway purine metabolism; GMP biosynthesis via salvage pathway; GMP from guanine: step 1/1. Its pathway is purine metabolism; XMP biosynthesis via salvage pathway; XMP from xanthine: step 1/1. Purine salvage pathway enzyme that catalyzes the transfer of the ribosyl-5-phosphate group from 5-phospho-alpha-D-ribose 1-diphosphate (PRPP) to the N9 position of the 6-oxopurines guanine and xanthine to form the corresponding ribonucleotides GMP (guanosine 5'-monophosphate) and XMP (xanthosine 5'-monophosphate), with the release of PPi. To a lesser extent, also acts on hypoxanthine. This is Xanthine-guanine phosphoribosyltransferase from Yersinia enterocolitica serotype O:8 / biotype 1B (strain NCTC 13174 / 8081).